A 156-amino-acid polypeptide reads, in one-letter code: Small ribosomal subunit protein uS7 (156 aa).

It belongs to the universal ribosomal protein uS7 family. Part of the 30S ribosomal subunit. Contacts proteins S9 and S11.

Its function is as follows. One of the primary rRNA binding proteins, it binds directly to 16S rRNA where it nucleates assembly of the head domain of the 30S subunit. Is located at the subunit interface close to the decoding center, probably blocks exit of the E-site tRNA. In Polynucleobacter asymbioticus (strain DSM 18221 / CIP 109841 / QLW-P1DMWA-1) (Polynucleobacter necessarius subsp. asymbioticus), this protein is Small ribosomal subunit protein uS7.